We begin with the raw amino-acid sequence, 202 residues long: NAD(P)H dehydrogenase (quinone) (202 aa).

Residues 7-193 (VLVLYYSMYG…TIARFQGRHF (187 aa)) enclose the Flavodoxin-like domain. FMN contacts are provided by residues 13–18 (SMYGHI) and 82–84 (TRF). Tyr15 serves as a coordination point for NAD(+). Trp102 contacts substrate. Residues 117–122 (STATGG) and His137 contribute to the FMN site.

This sequence belongs to the WrbA family. FMN is required as a cofactor.

The catalysed reaction is a quinone + NADH + H(+) = a quinol + NAD(+). It carries out the reaction a quinone + NADPH + H(+) = a quinol + NADP(+). This chain is NAD(P)H dehydrogenase (quinone), found in Rhodospirillum rubrum (strain ATCC 11170 / ATH 1.1.1 / DSM 467 / LMG 4362 / NCIMB 8255 / S1).